The following is a 593-amino-acid chain: Aspartate--tRNA ligase (593 aa).

Glu-180 is an L-aspartate binding site. The tract at residues 204–207 (QLFK) is aspartate. Arg-226 provides a ligand contact to L-aspartate. ATP contacts are provided by residues 226 to 228 (RDE) and Gln-235. His-454 contacts L-aspartate. Glu-488 is a binding site for ATP. Residue Arg-495 participates in L-aspartate binding. ATP is bound at residue 540–543 (GFDR).

The protein belongs to the class-II aminoacyl-tRNA synthetase family. Type 1 subfamily. As to quaternary structure, homodimer.

Its subcellular location is the cytoplasm. It catalyses the reaction tRNA(Asp) + L-aspartate + ATP = L-aspartyl-tRNA(Asp) + AMP + diphosphate. In terms of biological role, catalyzes the attachment of L-aspartate to tRNA(Asp) in a two-step reaction: L-aspartate is first activated by ATP to form Asp-AMP and then transferred to the acceptor end of tRNA(Asp). The chain is Aspartate--tRNA ligase from Clostridium novyi (strain NT).